The primary structure comprises 553 residues: Nucleoside-diphosphatase mig-23 (553 aa).

The Cytoplasmic segment spans residues 1 to 8 (MRVSRRFT). Residues 9-29 (ILAITAMIFLSLIICIYAVAA) traverse the membrane as a helical segment. At 30–489 (HTTVNVILQK…IVKETHSASE (460 aa)) the chain is on the lumenal side. Residue glutamate 174 is the Proton acceptor of the active site. N-linked (GlcNAc...) asparagine glycans are attached at residues asparagine 190 and asparagine 284. Residues 490–510 (SLWAPLFFLSAVFCLFVLVCA) traverse the membrane as a helical segment. Over 511-553 (KEHSLLCFDDKRRASFGLTRRQYSYKMLKEDRTSSSAFLENFA) the chain is Cytoplasmic.

It belongs to the GDA1/CD39 NTPase family.

Its subcellular location is the golgi apparatus membrane. It carries out the reaction a ribonucleoside 5'-diphosphate + H2O = a ribonucleoside 5'-phosphate + phosphate + H(+). Its function is as follows. Seems to be able to hydrolyze ADP, UDP and GDP. Supports mig-17 glycosylation and surface expression, which is required for proper migration of distal tip cells during gonad morphogenesis. This Caenorhabditis briggsae protein is Nucleoside-diphosphatase mig-23.